A 124-amino-acid polypeptide reads, in one-letter code: Small ribosomal subunit protein bS6 (124 aa).

The segment at 96–124 is disordered; sequence ETGPSPMMKEVQREEAKKSAATQPSEAQA. The span at 115–124 shows a compositional bias: polar residues; it reads AATQPSEAQA.

This sequence belongs to the bacterial ribosomal protein bS6 family.

Its function is as follows. Binds together with bS18 to 16S ribosomal RNA. This is Small ribosomal subunit protein bS6 from Paraburkholderia phytofirmans (strain DSM 17436 / LMG 22146 / PsJN) (Burkholderia phytofirmans).